The primary structure comprises 124 residues: Small ribosomal subunit protein uS12 (124 aa).

A 3-methylthioaspartic acid modification is found at aspartate 89. Lysine 108 is subject to N6-acetyllysine.

The protein belongs to the universal ribosomal protein uS12 family. Part of the 30S ribosomal subunit. Contacts proteins S8 and S17. May interact with IF1 in the 30S initiation complex.

Functionally, with S4 and S5 plays an important role in translational accuracy. Its function is as follows. Interacts with and stabilizes bases of the 16S rRNA that are involved in tRNA selection in the A site and with the mRNA backbone. Located at the interface of the 30S and 50S subunits, it traverses the body of the 30S subunit contacting proteins on the other side and probably holding the rRNA structure together. The combined cluster of proteins S8, S12 and S17 appears to hold together the shoulder and platform of the 30S subunit. This Escherichia coli (strain K12 / MC4100 / BW2952) protein is Small ribosomal subunit protein uS12.